We begin with the raw amino-acid sequence, 314 residues long: GDSL-like esterase Rv1075c (314 aa).

An N-terminal signal peptide occupies residues 1–21; that stretch reads MPRRSTIALATAGALASTGTA. The active-site Nucleophile is Ser80. Asp244 serves as the catalytic Proton donor. His247 serves as the catalytic Proton acceptor. Residues 276–314 are disordered; the sequence is IHETPSRPGTATLEPGHTRHSMMSRLRRPRPARAVPTGG. Positions 293–306 are enriched in basic residues; the sequence is TRHSMMSRLRRPRP.

This sequence belongs to the 'GDSL' lipolytic enzyme family.

The catalysed reaction is an acetyl ester + H2O = an aliphatic alcohol + acetate + H(+). The enzyme catalyses a butanoate ester + H2O = an aliphatic alcohol + butanoate + H(+). It catalyses the reaction triacetin + H2O = diacetylglycerol + acetate + H(+). It carries out the reaction 1,2,3-tributanoylglycerol + H2O = dibutanoylglycerol + butanoate + H(+). With respect to regulation, esterase activity is significantly inhibited by the serine modifier phenylmethylsulfonyl fluoride (PMSF). Completely inhibited by diethyl pyrocarbonate. Esterase that preferentially hydrolyzes short-chain fatty acids, particularly pNP-acetate (C2) and pNP-butyrate (C4). Also has weak activity with pNP-hexanoate (C6) and pNP-octanoate (C8). It can also hydrolyze short-chain tryglycerides such as triacetin and tributyrin. Important for intracellular survival. The protein is GDSL-like esterase Rv1075c of Mycobacterium tuberculosis (strain ATCC 25618 / H37Rv).